The sequence spans 318 residues: Deoxyribose-phosphate aldolase (318 aa).

D155 acts as the Proton donor/acceptor in catalysis. The active-site Schiff-base intermediate with acetaldehyde is K218. The active-site Proton donor/acceptor is K254.

The protein belongs to the DeoC/FbaB aldolase family. DeoC type 2 subfamily. As to quaternary structure, interacts with YBX1. In terms of tissue distribution, mainly expressed in liver, lung and colon.

It is found in the cytoplasm. Its subcellular location is the cytoplasmic granule. It localises to the nucleus. It catalyses the reaction 2-deoxy-D-ribose 5-phosphate = D-glyceraldehyde 3-phosphate + acetaldehyde. The protein operates within carbohydrate degradation; 2-deoxy-D-ribose 1-phosphate degradation; D-glyceraldehyde 3-phosphate and acetaldehyde from 2-deoxy-alpha-D-ribose 1-phosphate: step 2/2. Its function is as follows. Catalyzes a reversible aldol reaction between acetaldehyde and D-glyceraldehyde 3-phosphate to generate 2-deoxy-D-ribose 5-phosphate. Participates in stress granule (SG) assembly. May allow ATP production from extracellular deoxyinosine in conditions of energy deprivation. This Homo sapiens (Human) protein is Deoxyribose-phosphate aldolase (DERA).